Here is a 394-residue protein sequence, read N- to C-terminus: 1-deoxy-D-xylulose 5-phosphate reductoisomerase (394 aa).

NADPH contacts are provided by Thr10, Gly11, Ser12, Ile13, Gly38, Arg39, Asn40, and Asn123. Position 124 (Lys124) interacts with 1-deoxy-D-xylulose 5-phosphate. Position 125 (Glu125) interacts with NADPH. Asp149 is a binding site for Mn(2+). 1-deoxy-D-xylulose 5-phosphate contacts are provided by Ser150, Glu151, Ser175, and His198. A Mn(2+)-binding site is contributed by Glu151. Residue Gly204 participates in NADPH binding. Residues Ser211, Asn216, Lys217, and Glu220 each contribute to the 1-deoxy-D-xylulose 5-phosphate site. Residue Glu220 coordinates Mn(2+).

It belongs to the DXR family. Mg(2+) serves as cofactor. Requires Mn(2+) as cofactor.

It carries out the reaction 2-C-methyl-D-erythritol 4-phosphate + NADP(+) = 1-deoxy-D-xylulose 5-phosphate + NADPH + H(+). The protein operates within isoprenoid biosynthesis; isopentenyl diphosphate biosynthesis via DXP pathway; isopentenyl diphosphate from 1-deoxy-D-xylulose 5-phosphate: step 1/6. Catalyzes the NADPH-dependent rearrangement and reduction of 1-deoxy-D-xylulose-5-phosphate (DXP) to 2-C-methyl-D-erythritol 4-phosphate (MEP). This chain is 1-deoxy-D-xylulose 5-phosphate reductoisomerase, found in Cereibacter sphaeroides (strain ATCC 17029 / ATH 2.4.9) (Rhodobacter sphaeroides).